We begin with the raw amino-acid sequence, 97 residues long: MIDQEQVHKVANLARLELTPEEEEQFTTQLGSILDYIQQLDELDVSNVPPTTRAIDVSNITREDELQPYANRESILNSAPEQEGEFFKVPKILNSNE.

Belongs to the GatC family. Heterotrimer of A, B and C subunits.

It catalyses the reaction L-glutamyl-tRNA(Gln) + L-glutamine + ATP + H2O = L-glutaminyl-tRNA(Gln) + L-glutamate + ADP + phosphate + H(+). The enzyme catalyses L-aspartyl-tRNA(Asn) + L-glutamine + ATP + H2O = L-asparaginyl-tRNA(Asn) + L-glutamate + ADP + phosphate + 2 H(+). Allows the formation of correctly charged Asn-tRNA(Asn) or Gln-tRNA(Gln) through the transamidation of misacylated Asp-tRNA(Asn) or Glu-tRNA(Gln) in organisms which lack either or both of asparaginyl-tRNA or glutaminyl-tRNA synthetases. The reaction takes place in the presence of glutamine and ATP through an activated phospho-Asp-tRNA(Asn) or phospho-Glu-tRNA(Gln). The polypeptide is Aspartyl/glutamyl-tRNA(Asn/Gln) amidotransferase subunit C (Nostoc punctiforme (strain ATCC 29133 / PCC 73102)).